We begin with the raw amino-acid sequence, 555 residues long: uncharacterized protein (555 aa).

At 1–83 (MSNEDETTRL…GRRKLLCLYG (83 aa)) the chain is on the extracellular side. A helical transmembrane segment spans residues 84 to 104 (LVMIICIAESISMTATIPLVM). Residues 105–125 (DKVAEGISDENGHYDSVAVQT) lie on the Cytoplasmic side of the membrane. A helical membrane pass occupies residues 126–146 (IVSSISSSTMMIAGAISIFMA). The Extracellular segment spans residues 147-188 (GKWGELSDRIGRVRVFKYMSGIRVIGLLTHVFTLSSKMKYHK). Residues 189-209 (WAIVLTACIVPSFGGLFALVA) traverse the membrane as a helical segment. The Cytoplasmic segment spans residues 210–229 (NGNSYVSDIVKTEHRMVTIG). Residues 230–250 (IMMSCIYATMGVGPMFGSFLV) traverse the membrane as a helical segment. At 251 to 257 (KWTHGNG) the chain is on the extracellular side. A helical membrane pass occupies residues 258–278 (FIPIYTSIAFVILALIICETI). The Cytoplasmic segment spans residues 279-356 (MVEPRHETQM…LVPRHTVILL (78 aa)). Residues 289-311 (AHSQSTYTKRREKLRSQSGSDDA) are disordered. Residues 357-377 (IVLDILFVCGTTSCMPALILF) form a helical membrane-spanning segment. At 378-386 (STYEYKWHA) the chain is on the extracellular side. Residues 387–407 (VELGYFISILGIGRGVVLLVV) form a helical membrane-spanning segment. Topologically, residues 408–428 (SPTLLYTLKRIYQHLNHSIDK) are cytoplasmic. The chain crosses the membrane as a helical span at residues 429–449 (IDIFCIQFSMIVITLSLFVMI). Residues 450-459 (RFGEKTPTSM) lie on the Extracellular side of the membrane. A helical membrane pass occupies residues 460–480 (IIFALLQALSAFCSPTLQSGI). The Cytoplasmic segment spans residues 481–491 (IKYTSKKHTGE). Residues 492 to 512 (MFGAMALVRSCVMLVIPPILL) form a helical membrane-spanning segment. Residues 513–523 (KLYGSTVSVNP) lie on the Extracellular side of the membrane. A helical membrane pass occupies residues 524–544 (SLFMYIPFSTSIVAILLTFFL). Residues 545-555 (RIYKNPPLDGP) lie on the Cytoplasmic side of the membrane.

The protein localises to the membrane. This is an uncharacterized protein from Saccharomyces cerevisiae (strain ATCC 204508 / S288c) (Baker's yeast).